A 483-amino-acid chain; its full sequence is Altronate oxidoreductase (483 aa).

18–29 (IIQFGEGNFLRA) lines the NAD(+) pocket.

The protein belongs to the mannitol dehydrogenase family. UxaB subfamily.

It carries out the reaction D-altronate + NAD(+) = keto-D-tagaturonate + NADH + H(+). Its pathway is carbohydrate metabolism; pentose and glucuronate interconversion. The polypeptide is Altronate oxidoreductase (Escherichia coli O1:K1 / APEC).